A 46-amino-acid polypeptide reads, in one-letter code: Hellethionin-D (46 aa).

Cystine bridges form between C3-C40, C4-C32, C12-C30, and C16-C26.

Belongs to the plant thionin (TC 1.C.44) family. 4 C-C subfamily.

The protein localises to the secreted. In terms of biological role, thionins are small plant proteins which are toxic to animal cells. They seem to exert their toxic effect at the level of the cell membrane. Their precise function is not known. In Helleborus purpurascens (Purple hellebore), this protein is Hellethionin-D.